The primary structure comprises 299 residues: Fructose-1,6-bisphosphatase class 1 (299 aa).

Residues E79, D98, L100, and D101 each contribute to the Mg(2+) site. Substrate is bound by residues 101–104 (DGSS), Y207, and K238. E244 provides a ligand contact to Mg(2+).

Belongs to the FBPase class 1 family. Homotetramer. Mg(2+) serves as cofactor.

It is found in the cytoplasm. The catalysed reaction is beta-D-fructose 1,6-bisphosphate + H2O = beta-D-fructose 6-phosphate + phosphate. Its pathway is carbohydrate biosynthesis; gluconeogenesis. In Campylobacter curvus (strain 525.92), this protein is Fructose-1,6-bisphosphatase class 1.